Reading from the N-terminus, the 426-residue chain is MTEIVDIIAREILDSRGNPTVEVDVVLEDGAFGRAAVPSGASTGAHEAVEKRDGDKSRYGGKGVKSAVDAVNGELFDALSGVDAEDQRRIDNLMIALDGTPNKSRLGANAILGVSLAVAKAAAESAGLPLYKYVGGVSARVLPVPMMNIINGGAHADNPIDIQEFMILPTGSPTFAEALRMGAEIFHGLKKALKDAGHNTNVGDEGGFAPNLGSAEDALAFIVKAGEAAGYKSGEDFVLGLDVAATEFFKNGKYELEGEGKSLDPAQMVDYLAGLADKFPILSIEDGMSEDDFDGWKLLTDKLGKKVQLVGDDLFVTNPKRLQIGLDKGLANSILIKVNQIGTLSETIDAVDMAHRAAYTSVMSHRSGETEDSTIADLAVALNCGQIKTGSLARSDRLAKYNQLLRIEEALDDQAVYAGRAVLKGR.

The tract at residues 38–60 (PSGASTGAHEAVEKRDGDKSRYG) is disordered. A compositionally biased stretch (basic and acidic residues) spans 47–58 (EAVEKRDGDKSR). Residue Q163 coordinates (2R)-2-phosphoglycerate. E205 functions as the Proton donor in the catalytic mechanism. Mg(2+) is bound by residues D242, E285, and D312. 4 residues coordinate (2R)-2-phosphoglycerate: K337, R366, S367, and K388. The Proton acceptor role is filled by K337.

It belongs to the enolase family. Mg(2+) serves as cofactor.

The protein resides in the cytoplasm. It is found in the secreted. It localises to the cell surface. It carries out the reaction (2R)-2-phosphoglycerate = phosphoenolpyruvate + H2O. Its pathway is carbohydrate degradation; glycolysis; pyruvate from D-glyceraldehyde 3-phosphate: step 4/5. Catalyzes the reversible conversion of 2-phosphoglycerate (2-PG) into phosphoenolpyruvate (PEP). It is essential for the degradation of carbohydrates via glycolysis. This chain is Enolase, found in Caulobacter sp. (strain K31).